We begin with the raw amino-acid sequence, 570 residues long: MSKNPPDLSGGEVKAKQIRFDSDARSALQEGVDQMAEAVKVTLGPKGRNVVLEKSFGAPTITKDGVTVAKEIELEERLPNIGAQVLKEAASKTNDDAGDGTTTATVLAQSVINAGMKSVTSGANPMDVKRGITAAAEEVVTHLRNQSDPVEGKDRISQVATISANNDDAIGDLIADAFERVGQDGVITVEEARGIETYLDVVEGMQFDRGYLSPYFVTDSEEMEAVLEDAYILIYDDEVGNMQDLLPILEKVSQTSNPLLIIAEDVEGEALATLVVNKMRGTLKVSAVKAPGFGDRRQSMLEDIAVLTGGTVISEEKGYRLENATLDYLGQADRVTIDQDNTTIVGGEGSEEEIEARVNQIRQQIANSTSDYDQEKLQERLAKLAGGVAVLNVGAATEPEMKAQKALVEDALSATRAAVDEGVLPGGGVAYLRALESIEEVEVENEDQEIGVSIVREALEAPLRQIAENTGHEGSIVVQKVKDGEGDFGFNARTEEYGDLLDQGVLDPTKVTRSALENAASVGGMLLTTEAVIADLEDEDDDDGGGGGGGGMPAGGAGGMGGMGGMGGMM.

ATP contacts are provided by residues 42–45, Lys63, 99–103, Gly427, and Asp507; these read TLGP and DGTTT. The interval 537–570 is disordered; the sequence is EDEDDDDGGGGGGGGMPAGGAGGMGGMGGMGGMM. Residues 545–570 are compositionally biased toward gly residues; the sequence is GGGGGGGMPAGGAGGMGGMGGMGGMM.

The protein belongs to the chaperonin (HSP60) family. Forms a cylinder of 14 subunits composed of two heptameric rings stacked back-to-back. Interacts with the co-chaperonin GroES.

The protein localises to the cytoplasm. It catalyses the reaction ATP + H2O + a folded polypeptide = ADP + phosphate + an unfolded polypeptide.. Together with its co-chaperonin GroES, plays an essential role in assisting protein folding. The GroEL-GroES system forms a nano-cage that allows encapsulation of the non-native substrate proteins and provides a physical environment optimized to promote and accelerate protein folding. This chain is Chaperonin GroEL 1, found in Salinibacter ruber (strain DSM 13855 / M31).